Here is a 481-residue protein sequence, read N- to C-terminus: Glutamate--tRNA ligase (481 aa).

The 'HIGH' region motif lies at 28–38 (PSPTGFLHLGG). Over residues 139–148 (RYDGTWRPEP) the composition is skewed to basic and acidic residues. The disordered stretch occupies residues 139-159 (RYDGTWRPEPGKTLPPVPADR). The short motif at 260–264 (KLSKR) is the 'KMSKS' region element. Position 263 (Lys263) interacts with ATP.

It belongs to the class-I aminoacyl-tRNA synthetase family. Glutamate--tRNA ligase type 1 subfamily. In terms of assembly, monomer.

It localises to the cytoplasm. The catalysed reaction is tRNA(Glu) + L-glutamate + ATP = L-glutamyl-tRNA(Glu) + AMP + diphosphate. In terms of biological role, catalyzes the attachment of glutamate to tRNA(Glu) in a two-step reaction: glutamate is first activated by ATP to form Glu-AMP and then transferred to the acceptor end of tRNA(Glu). This Bordetella bronchiseptica (strain ATCC BAA-588 / NCTC 13252 / RB50) (Alcaligenes bronchisepticus) protein is Glutamate--tRNA ligase.